We begin with the raw amino-acid sequence, 351 residues long: Thiamine-phosphate synthase (351 aa).

The segment at 1–129 (MVEPYSQQKQ…GQACKQMRYR (129 aa)) is unknown. The thiamine-phosphate synthase stretch occupies residues 130-351 (VYSLETNLMG…SQLNRIKPES (222 aa)). 4-amino-2-methyl-5-(diphosphooxymethyl)pyrimidine is bound by residues 177–181 (QYRDK) and Asn209. Mg(2+) is bound by residues Asp210 and Asp229. Ser248 is a 4-amino-2-methyl-5-(diphosphooxymethyl)pyrimidine binding site. 274–276 (TPT) is a binding site for 2-[(2R,5Z)-2-carboxy-4-methylthiazol-5(2H)-ylidene]ethyl phosphate. 4-amino-2-methyl-5-(diphosphooxymethyl)pyrimidine is bound at residue Lys277. Residue Gly304 coordinates 2-[(2R,5Z)-2-carboxy-4-methylthiazol-5(2H)-ylidene]ethyl phosphate.

Belongs to the thiamine-phosphate synthase family. Mg(2+) serves as cofactor.

It catalyses the reaction 2-[(2R,5Z)-2-carboxy-4-methylthiazol-5(2H)-ylidene]ethyl phosphate + 4-amino-2-methyl-5-(diphosphooxymethyl)pyrimidine + 2 H(+) = thiamine phosphate + CO2 + diphosphate. It carries out the reaction 2-(2-carboxy-4-methylthiazol-5-yl)ethyl phosphate + 4-amino-2-methyl-5-(diphosphooxymethyl)pyrimidine + 2 H(+) = thiamine phosphate + CO2 + diphosphate. The catalysed reaction is 4-methyl-5-(2-phosphooxyethyl)-thiazole + 4-amino-2-methyl-5-(diphosphooxymethyl)pyrimidine + H(+) = thiamine phosphate + diphosphate. The protein operates within cofactor biosynthesis; thiamine diphosphate biosynthesis; thiamine phosphate from 4-amino-2-methyl-5-diphosphomethylpyrimidine and 4-methyl-5-(2-phosphoethyl)-thiazole: step 1/1. Condenses 4-methyl-5-(beta-hydroxyethyl)thiazole monophosphate (THZ-P) and 2-methyl-4-amino-5-hydroxymethyl pyrimidine pyrophosphate (HMP-PP) to form thiamine monophosphate (TMP). The polypeptide is Thiamine-phosphate synthase (Nostoc sp. (strain PCC 7120 / SAG 25.82 / UTEX 2576)).